A 930-amino-acid polypeptide reads, in one-letter code: Protocadherin gamma-B6 (930 aa).

A signal peptide spans 1-30 (MGGSCAQRRRAGPRQVLFPLLLPLFYPTLS). Cadherin domains lie at 31-133 (EPIR…APQF), 134-242 (DKKE…PPVF), 243-347 (SRDE…SPEI), 348-452 (IITS…APVF), 453-562 (DQTS…APRV), and 570-675 (DGSA…LPDL). At 31–691 (EPIRYSIPEE…SDPQAELQFY (661 aa)) the chain is on the extracellular side. Asn304, Asn419, and Asn545 each carry an N-linked (GlcNAc...) asparagine glycan. A helical transmembrane segment spans residues 692-712 (LVVALALISVLFLLAVILAIA). Topologically, residues 713–930 (LRLRRSLSPA…KKKSGKKEKK (218 aa)) are cytoplasmic. 2 disordered regions span residues 791–839 (PHGG…WPNN) and 900–930 (ATLT…KEKK). Over residues 800 to 839 (HPETLTSQAPPNTDWRFSQAQRPGTSGSQNGDDTGTWPNN) the composition is skewed to polar residues. Residues 920-930 (NKKKSGKKEKK) show a composition bias toward basic residues.

The protein resides in the cell membrane. Potential calcium-dependent cell-adhesion protein. May be involved in the establishment and maintenance of specific neuronal connections in the brain. This is Protocadherin gamma-B6 (PCDHGB6) from Homo sapiens (Human).